The primary structure comprises 927 residues: MSKKRLHEIAKEIGKTSKEVVEQAQSLGLPVKSHASSVEENDATRIVESFSSSKTKAPTNSVQTNQGVKTESKTVETKQGLSDDKPSTQPVAKPKPQSRNFKAEREARAKAEAEKRQHNGDHRKNNRHNDTRSDDRRHQGQKRSNGNRNDNRQGQQNNRNKNDGRYADHKQKPQTRPQQPAGNRIDFKARAAALKAEQNAEYSRHSEQRFREEQEAKRQAAKEQELAKAAALKAQEEAQKAKEKLASKPVAKVKEIVNKVAATPSQTADSRRKKQTRSDKSRQFSNENEDGQKQTRNKKNWNNQNQVRNQRNSNWNHNKKNKKGKTNGAPKPVTERKFHELPKEFEYTEGMTVAEIAKRIKREPAEIVKKLFMMGVMATQNQSLDGDTIELLMVDYGIEAHAKVEVDEADIERFFADEDYLNPDNLTERPPVVTIMGHVDHGKTTLLDTLRNSRVATGEAGGITQHIGAYQIEEAGKKITFLDTPGHAAFTSMRARGASVTDITILIVAADDGVMPQTVEAINHSKAAGVPIIVAINKIDKPGANPERVISELAEHGVISTAWGGESEFVEISAKFGKNIQELLETVLLVAEMEELKADADVRAIGTVIEARLDKGKGAVATLLVQQGTLNVQDPIVVGNTFGRVRAMTNDLGRRVKVAGPSTPVSITGLNEAPMAGDHFAVYADEKAARAAGEERAKRALLKQRQNTQRVSLENLFDTLKAGEVKSVNVIIKADVQGSVEALAASLLKIDVEGVKVNVVHSAVGAINESDVTLAEASNAVIIGFNVRPTPQARQQADADDVEIRQHSIIYKVIEEVEEAMKGKLDPEYQEKILGEAIIRETFKVSKVGTIGGFMVINGKVTRDSSVRVIRDGVVIFDGKLASLKHYKDDVKEVGNAQEGGLMIENYNDLKEDDTIEAYIMEEIKRK.

The interval 27–337 is disordered; it reads LGLPVKSHAS…GAPKPVTERK (311 aa). Over residues 49–69 the composition is skewed to polar residues; the sequence is SFSSSKTKAPTNSVQTNQGVK. 2 stretches are compositionally biased toward basic and acidic residues: residues 70–86 and 101–138; these read TESK…DDKP and FKAE…DRRH. Positions 146-159 are enriched in low complexity; that stretch reads GNRNDNRQGQQNNR. Basic and acidic residues-rich tracts occupy residues 160–171, 202–226, and 234–257; these read NKNDGRYADHKQ, YSRH…EQEL, and AQEE…KEIV. Over residues 300–316 the composition is skewed to low complexity; that stretch reads NWNNQNQVRNQRNSNWN. The region spanning 428-597 is the tr-type G domain; that stretch reads ERPPVVTIMG…LLVAEMEELK (170 aa). The segment at 437 to 444 is G1; that stretch reads GHVDHGKT. 437–444 lines the GTP pocket; it reads GHVDHGKT. Residues 462-466 are G2; the sequence is GITQH. A G3 region spans residues 483–486; the sequence is DTPG. GTP contacts are provided by residues 483-487 and 537-540; these read DTPGH and NKID. Positions 537 to 540 are G4; sequence NKID. Residues 573 to 575 form a G5 region; it reads SAK.

This sequence belongs to the TRAFAC class translation factor GTPase superfamily. Classic translation factor GTPase family. IF-2 subfamily.

The protein resides in the cytoplasm. Its function is as follows. One of the essential components for the initiation of protein synthesis. Protects formylmethionyl-tRNA from spontaneous hydrolysis and promotes its binding to the 30S ribosomal subunits. Also involved in the hydrolysis of GTP during the formation of the 70S ribosomal complex. This Streptococcus agalactiae serotype V (strain ATCC BAA-611 / 2603 V/R) protein is Translation initiation factor IF-2.